The primary structure comprises 213 residues: Pyrrolidone-carboxylate peptidase (213 aa).

Active-site residues include Glu-80, Cys-143, and His-166.

Belongs to the peptidase C15 family. As to quaternary structure, homotetramer.

The protein localises to the cytoplasm. It catalyses the reaction Release of an N-terminal pyroglutamyl group from a polypeptide, the second amino acid generally not being Pro.. Its function is as follows. Removes 5-oxoproline from various penultimate amino acid residues except L-proline. The protein is Pyrrolidone-carboxylate peptidase of Clavibacter michiganensis subsp. michiganensis (strain NCPPB 382).